Here is a 461-residue protein sequence, read N- to C-terminus: Photosystem II CP43 reaction center protein (461 aa).

The propeptide occupies 1-2 (ME). At T3 the chain carries N-acetylthreonine. Phosphothreonine is present on T3. The next 5 helical transmembrane spans lie at 57-81 (LFEV…PHLA), 122-143 (LIGP…KDKN), 166-188 (KALY…RIIT), 243-263 (QPWA…LSYS), and 279-300 (WFNN…ASQS). Residue E355 coordinates [CaMn4O5] cluster. A helical membrane pass occupies residues 435–459 (RARAAAAGFEKGIDRFNEPTLSLRP).

Belongs to the PsbB/PsbC family. PsbC subfamily. In terms of assembly, PSII is composed of 1 copy each of membrane proteins PsbA, PsbB, PsbC, PsbD, PsbE, PsbF, PsbH, PsbI, PsbJ, PsbK, PsbL, PsbM, PsbT, PsbX, PsbY, PsbZ, Psb30/Ycf12, at least 3 peripheral proteins of the oxygen-evolving complex and a large number of cofactors. It forms dimeric complexes. Binds multiple chlorophylls and provides some of the ligands for the Ca-4Mn-5O cluster of the oxygen-evolving complex. It may also provide a ligand for a Cl- that is required for oxygen evolution. PSII binds additional chlorophylls, carotenoids and specific lipids. is required as a cofactor.

It localises to the plastid. Its subcellular location is the chloroplast thylakoid membrane. Functionally, one of the components of the core complex of photosystem II (PSII). It binds chlorophyll and helps catalyze the primary light-induced photochemical processes of PSII. PSII is a light-driven water:plastoquinone oxidoreductase, using light energy to abstract electrons from H(2)O, generating O(2) and a proton gradient subsequently used for ATP formation. This chain is Photosystem II CP43 reaction center protein, found in Oedogonium cardiacum (Filamentous green alga).